Consider the following 452-residue polypeptide: Glycylpeptide N-tetradecanoyltransferase (452 aa).

Tetradecanoyl-CoA contacts are provided by residues 38–41 (YKFW), 171–173 (LCI), and 179–183 (SKRLA). L452 functions as the Proton acceptor; via carboxylate in the catalytic mechanism.

The protein belongs to the NMT family. Monomer.

It is found in the cytoplasm. It carries out the reaction N-terminal glycyl-[protein] + tetradecanoyl-CoA = N-tetradecanoylglycyl-[protein] + CoA + H(+). Functionally, adds a myristoyl group to the N-terminal glycine residue of certain cellular proteins. In Eremothecium gossypii (strain ATCC 10895 / CBS 109.51 / FGSC 9923 / NRRL Y-1056) (Yeast), this protein is Glycylpeptide N-tetradecanoyltransferase (NMT1).